Reading from the N-terminus, the 537-residue chain is ESX-2 secretion system protein EccE2 (537 aa).

Residues Ala-31–Val-51 form a helical membrane-spanning segment.

The protein belongs to the EccE family. As to quaternary structure, could be part of the ESX-2 / type VII secretion system (T7SS), which is composed of cytosolic and membrane components.

It localises to the cell membrane. In Mycobacterium tuberculosis (strain CDC 1551 / Oshkosh), this protein is ESX-2 secretion system protein EccE2 (eccE2).